Consider the following 185-residue polypeptide: Ribosome-recycling factor (185 aa).

Belongs to the RRF family.

It localises to the cytoplasm. Its function is as follows. Responsible for the release of ribosomes from messenger RNA at the termination of protein biosynthesis. May increase the efficiency of translation by recycling ribosomes from one round of translation to another. The protein is Ribosome-recycling factor of Clostridium botulinum (strain Eklund 17B / Type B).